Here is a 365-residue protein sequence, read N- to C-terminus: Flavone synthase (365 aa).

Positions 76, 218, 220, and 276 each coordinate Fe cation. One can recognise a Fe2OG dioxygenase domain in the interval 194–295; the sequence is MEQKVLINYY…RLSIATFQNP (102 aa). The disordered stretch occupies residues 345–365; that stretch reads RLQDEKAKLEMKSKSADENLA.

The protein belongs to the iron/ascorbate-dependent oxidoreductase family. Fe cation is required as a cofactor. The cofactor is L-ascorbate.

The protein localises to the cytoplasm. The enzyme catalyses a flavanone + 2-oxoglutarate + O2 = a flavone + succinate + CO2 + H2O. It participates in secondary metabolite biosynthesis; flavonoid biosynthesis. Involved in the conversion of naringenin to apigenin. Acts via a direct 2,3-desaturation of flavanones instead of a sequential hydroxylation/dehydratation mechanism. The polypeptide is Flavone synthase (FNSI) (Petroselinum crispum (Parsley)).